A 412-amino-acid chain; its full sequence is uncharacterized protein (412 aa).

The 180-residue stretch at 20–199 (FFYFDFDAFF…LPIVELPGIG (180 aa)) folds into the UmuC domain.

The protein belongs to the DNA polymerase type-Y family.

This is an uncharacterized protein from Mycoplasma pneumoniae (strain ATCC 29342 / M129 / Subtype 1) (Mycoplasmoides pneumoniae).